Reading from the N-terminus, the 141-residue chain is HTH-type transcriptional repressor NsrR (141 aa).

The 128-residue stretch at 2–129 (QLTSFTDYAL…DECTIESLLS (128 aa)) folds into the HTH rrf2-type domain. The H-T-H motif DNA-binding region spans 28-51 (ITEVTDLFGVSRNHMVKVINRLGQ). The [2Fe-2S] cluster site is built by C91, C96, and C102.

[2Fe-2S] cluster is required as a cofactor.

In terms of biological role, nitric oxide-sensitive repressor of genes involved in protecting the cell against nitrosative stress. May require iron for activity. The chain is HTH-type transcriptional repressor NsrR from Vibrio parahaemolyticus serotype O3:K6 (strain RIMD 2210633).